Consider the following 241-residue polypeptide: Phosphoribosylaminoimidazole-succinocarboxamide synthase (241 aa).

This sequence belongs to the SAICAR synthetase family.

The catalysed reaction is 5-amino-1-(5-phospho-D-ribosyl)imidazole-4-carboxylate + L-aspartate + ATP = (2S)-2-[5-amino-1-(5-phospho-beta-D-ribosyl)imidazole-4-carboxamido]succinate + ADP + phosphate + 2 H(+). It participates in purine metabolism; IMP biosynthesis via de novo pathway; 5-amino-1-(5-phospho-D-ribosyl)imidazole-4-carboxamide from 5-amino-1-(5-phospho-D-ribosyl)imidazole-4-carboxylate: step 1/2. This is Phosphoribosylaminoimidazole-succinocarboxamide synthase from Lacticaseibacillus paracasei (strain ATCC 334 / BCRC 17002 / CCUG 31169 / CIP 107868 / KCTC 3260 / NRRL B-441) (Lactobacillus paracasei).